The primary structure comprises 227 residues: Cytochrome c oxidase subunit 2 (227 aa).

Residues 1–14 are Mitochondrial intermembrane-facing; the sequence is MAYPFQLGLQDATS. Residues 15–45 form a helical membrane-spanning segment; it reads PIMEELLHFHDHTLMIVFLISSLVLYIISLM. Residues 46–59 lie on the Mitochondrial matrix side of the membrane; the sequence is LTTKLTHTSTMDAQ. The helical transmembrane segment at 60-87 threads the bilayer; it reads EVETVWTILPAIILILIALLSLRILYMM. Residues 88–227 are Mitochondrial intermembrane-facing; it reads DEINNPFLTM…YFETWSALMV (140 aa). Cu cation contacts are provided by histidine 161, cysteine 196, glutamate 198, cysteine 200, histidine 204, and methionine 207. Position 198 (glutamate 198) interacts with Mg(2+). Position 218 is a phosphotyrosine (tyrosine 218).

Belongs to the cytochrome c oxidase subunit 2 family. Component of the cytochrome c oxidase (complex IV, CIV), a multisubunit enzyme composed of 14 subunits. The complex is composed of a catalytic core of 3 subunits MT-CO1, MT-CO2 and MT-CO3, encoded in the mitochondrial DNA, and 11 supernumerary subunits COX4I, COX5A, COX5B, COX6A, COX6B, COX6C, COX7A, COX7B, COX7C, COX8 and NDUFA4, which are encoded in the nuclear genome. The complex exists as a monomer or a dimer and forms supercomplexes (SCs) in the inner mitochondrial membrane with NADH-ubiquinone oxidoreductase (complex I, CI) and ubiquinol-cytochrome c oxidoreductase (cytochrome b-c1 complex, complex III, CIII), resulting in different assemblies (supercomplex SCI(1)III(2)IV(1) and megacomplex MCI(2)III(2)IV(2)). Found in a complex with TMEM177, COA6, COX18, COX20, SCO1 and SCO2. Interacts with TMEM177 in a COX20-dependent manner. Interacts with COX20. Interacts with COX16. Requires Cu cation as cofactor.

The protein localises to the mitochondrion inner membrane. It carries out the reaction 4 Fe(II)-[cytochrome c] + O2 + 8 H(+)(in) = 4 Fe(III)-[cytochrome c] + 2 H2O + 4 H(+)(out). Component of the cytochrome c oxidase, the last enzyme in the mitochondrial electron transport chain which drives oxidative phosphorylation. The respiratory chain contains 3 multisubunit complexes succinate dehydrogenase (complex II, CII), ubiquinol-cytochrome c oxidoreductase (cytochrome b-c1 complex, complex III, CIII) and cytochrome c oxidase (complex IV, CIV), that cooperate to transfer electrons derived from NADH and succinate to molecular oxygen, creating an electrochemical gradient over the inner membrane that drives transmembrane transport and the ATP synthase. Cytochrome c oxidase is the component of the respiratory chain that catalyzes the reduction of oxygen to water. Electrons originating from reduced cytochrome c in the intermembrane space (IMS) are transferred via the dinuclear copper A center (CU(A)) of subunit 2 and heme A of subunit 1 to the active site in subunit 1, a binuclear center (BNC) formed by heme A3 and copper B (CU(B)). The BNC reduces molecular oxygen to 2 water molecules using 4 electrons from cytochrome c in the IMS and 4 protons from the mitochondrial matrix. This chain is Cytochrome c oxidase subunit 2 (MT-CO2), found in Nyctereutes procyonoides (Raccoon dog).